The sequence spans 1027 residues: Kinesin heavy chain isoform 5A (1027 aa).

Residue Ala2 is modified to N-acetylalanine. Residues 9-327 (SIKVLCRFRP…LMFGQRAKTI (319 aa)) form the Kinesin motor domain. Residue 86 to 93 (GQTSSGKT) coordinates ATP. The microtubule-binding stretch occupies residues 174-315 (VSSPEEILDV…PSSYNDAETK (142 aa)). Positions 271–361 (EGTKSYVPYR…KTKAQKETIA (91 aa)) are necessary for interaction with ZFYVE27. The stretch at 331 to 905 (ASVNLELTAE…EVDRIKEAVR (575 aa)) forms a coiled coil. Positions 353-1027 (TKAQKETIAK…FPLHQETAAS (675 aa)) are interaction with BICD2. At Thr397 the chain carries Phosphothreonine. Residues 906 to 936 (YKSSGKRGHSAQIAKPVRPGHYPASSPTNPY) form a disordered region. The globular stretch occupies residues 907-1027 (KSSGKRGHSA…FPLHQETAAS (121 aa)).

This sequence belongs to the TRAFAC class myosin-kinesin ATPase superfamily. Kinesin family. Kinesin subfamily. In terms of assembly, oligomer composed of two heavy chains and two light chains. Interacts with GRIP1. Interacts with FMR1 (via C-terminus); this interaction is increased in a mGluR-dependent manner. Interacts with BORCS5. Interacts with ZFYVE27. Interacts with VAPA, VAPB, SURF4, RAB11A (GDP-bound form), RAB11B (GDP-bound form) and RTN3 in a ZFYVE27-dependent manner. Interacts with BICD2. Interacts with DTNB. In terms of tissue distribution, expressed in brain.

It is found in the cytoplasm. Its subcellular location is the perinuclear region. The protein localises to the cytoskeleton. It localises to the perikaryon. It carries out the reaction ATP + H2O + a kinesin associated with a microtubule at position (n) = ADP + phosphate a kinesin associated with a microtubule at position (n+1, toward the plus end).. Microtubule-dependent motor required for slow axonal transport of neurofilament proteins (NFH, NFM and NFL). Can induce formation of neurite-like membrane protrusions in non-neuronal cells in a ZFYVE27-dependent manner. The ZFYVE27-KIF5A complex contributes to the vesicular transport of VAPA, VAPB, SURF4, RAB11A, RAB11B and RTN3 proteins in neurons. Required for anterograde axonal transportation of MAPK8IP3/JIP3 which is essential for MAPK8IP3/JIP3 function in axon elongation. This is Kinesin heavy chain isoform 5A from Rattus norvegicus (Rat).